Reading from the N-terminus, the 239-residue chain is Ribosomal RNA small subunit methyltransferase G (239 aa).

Residues G78, F83, 129 to 130 (AE), and R148 each bind S-adenosyl-L-methionine.

This sequence belongs to the methyltransferase superfamily. RNA methyltransferase RsmG family.

The protein resides in the cytoplasm. Its function is as follows. Specifically methylates the N7 position of a guanine in 16S rRNA. The chain is Ribosomal RNA small subunit methyltransferase G from Clostridium perfringens (strain 13 / Type A).